The chain runs to 86 residues: Protein Vpu (86 aa).

The Extracellular segment spans residues 1-8 (MDIVQQVG). A helical membrane pass occupies residues 9–29 (LLVVLIIELVIVIVIWVKVYK). Residues 30-86 (LCKEDRRQKKIDRLIARIRERAEDSGNESDGDTEELQDLITEGDNLMHIGIRDNRNN) are Cytoplasmic-facing. 2 positions are modified to phosphoserine; by host CK2: Ser-54 and Ser-58.

This sequence belongs to the HIV-1 VPU protein family. Homopentamer. Interacts with host CD4 and BRTC; these interactions induce proteasomal degradation of CD4. Interacts with host BST2; this interaction leads to the degradation of host BST2. Interacts with host FBXW11. Interacts with host AP1M1; this interaction plays a role in the mistrafficking and subsequent degradation of host BST2. Interacts with host RANBP2; this interaction allows Vpu to down-regulate host BLM sumoylation. Forms pentamers or hexamers. Interacts with host CD4 and BRTC; these interactions induce proteasomal degradation of CD4. Interacts with host BST2; this interaction leads to the degradation of host BST2. Interacts with host FBXW11. Interacts with host AP1M1; this interaction plays a role in the mistrafficking and subsequent degradation of host BST2. Post-translationally, phosphorylated by host CK2. This phosphorylation is necessary for interaction with human BTRC and degradation of CD4.

The protein localises to the host membrane. With respect to regulation, ion channel activity is inhibited by hexamethylene amiloride in vitro. Functionally, enhances virion budding by targeting host CD4 and Tetherin/BST2 to proteasome degradation. Degradation of CD4 prevents any unwanted premature interactions between viral Env and its host receptor CD4 in the endoplasmic reticulum. Degradation of antiretroviral protein Tetherin/BST2 is important for virion budding, as BST2 tethers new viral particles to the host cell membrane. Mechanistically, Vpu bridges either CD4 or BST2 to BTRC, a substrate recognition subunit of the Skp1/Cullin/F-box protein E3 ubiquitin ligase, induces their ubiquitination and subsequent proteasomal degradation. The alteration of the E3 ligase specificity by Vpu seems to promote the degradation of host IKBKB, leading to NF-kappa-B down-regulation and subsequent apoptosis. Acts as a viroporin that forms an oligomeric ion channel in membranes. Modulates the host DNA repair mechanisms to promote degradation of nuclear viral cDNA in cells that are already productively infected in order to suppress immune sensing and proviral hyper-integration (superinfection). Manipulates PML-NBs and modulates SUMOylation of host BLM protein thereby enhancing its DNA-end processing activity toward viral unintegrated linear DNA. Also inhibits RAD52-mediated homologous repair of viral cDNA, preventing the generation of dead-end circular forms of single copies of the long terminal repeat and permitting sustained nucleolytic attack. The sequence is that of Protein Vpu from Pan troglodytes (Chimpanzee).